The primary structure comprises 120 residues: V-type proton ATPase subunit F (120 aa).

Belongs to the V-ATPase F subunit family. V-ATPase is a heteromultimeric enzyme composed of a peripheral catalytic V1 complex (components A to H) attached to an integral membrane V0 proton pore complex (components: a, c, c', c'', d, e, f and VOA1).

It localises to the vacuole membrane. Functionally, subunit of the V1 complex of vacuolar(H+)-ATPase (V-ATPase), a multisubunit enzyme composed of a peripheral complex (V1) that hydrolyzes ATP and a membrane integral complex (V0) that translocates protons. V-ATPase is responsible for acidifying and maintaining the pH of intracellular compartments. The protein is V-type proton ATPase subunit F of Schizosaccharomyces pombe (strain 972 / ATCC 24843) (Fission yeast).